Here is a 427-residue protein sequence, read N- to C-terminus: Transcriptional enhancer factor TEF-3 (427 aa).

Residues 1-32 (MTSNEWSSPDSPEGSSISGGSQALDKPIDNDA) are disordered. Low complexity predominate over residues 7–21 (SSPDSPEGSSISGGS). Positions 29–105 (DNDAEGVWSP…QVLARRKARE (77 aa)) form a DNA-binding region, TEA. The short motif at 78–94 (IKLRTGKTRTRKQVSSH) is the Nuclear localization signal element. Positions 163–206 (QPGTSHDVKPFSQNTYPVQPPLPLPGFESPAGPTPSPSAPLAPP) are disordered. The segment covering 194–205 (GPTPSPSAPLAP) has biased composition (pro residues).

Interacts with WWTR1/TAZ. Interacts with YAP1. Preferentially expressed in lung and in skeletal muscle.

The protein resides in the nucleus. Transcription factor which plays a key role in the Hippo signaling pathway, a pathway involved in organ size control and tumor suppression by restricting proliferation and promoting apoptosis. The core of this pathway is composed of a kinase cascade wherein MST1/MST2, in complex with its regulatory protein SAV1, phosphorylates and activates LATS1/2 in complex with its regulatory protein MOB1, which in turn phosphorylates and inactivates YAP1 oncoprotein and WWTR1/TAZ. Acts by mediating gene expression of YAP1 and WWTR1/TAZ, thereby regulating cell proliferation, migration and epithelial mesenchymal transition (EMT) induction. Binds specifically and non-cooperatively to the Sph and GT-IIC 'enhansons' (5'-GTGGAATGT-3') and activates transcription. Binds to the M-CAT motif. Might play a role in the embryonic development of skeletal muscle. The sequence is that of Transcriptional enhancer factor TEF-3 (Tead4) from Mus musculus (Mouse).